The sequence spans 433 residues: Glutamate-1-semialdehyde 2,1-aminomutase (433 aa).

Lys272 is subject to N6-(pyridoxal phosphate)lysine.

This sequence belongs to the class-III pyridoxal-phosphate-dependent aminotransferase family. HemL subfamily. As to quaternary structure, homodimer. Pyridoxal 5'-phosphate is required as a cofactor.

It is found in the cytoplasm. The catalysed reaction is (S)-4-amino-5-oxopentanoate = 5-aminolevulinate. It functions in the pathway porphyrin-containing compound metabolism; protoporphyrin-IX biosynthesis; 5-aminolevulinate from L-glutamyl-tRNA(Glu): step 2/2. The chain is Glutamate-1-semialdehyde 2,1-aminomutase from Methylacidiphilum infernorum (isolate V4) (Methylokorus infernorum (strain V4)).